The following is a 274-amino-acid chain: Large ribosomal subunit protein uL2cz/uL2cy (274 aa).

Residues 224 to 274 form a disordered region; sequence NPVDHPHGGGEGRAPIGRKKPATPWGYPALGRRSRKRNKYSDNLILRRRSK.

This sequence belongs to the universal ribosomal protein uL2 family. Part of the 50S ribosomal subunit.

It localises to the plastid. The protein resides in the chloroplast. The chain is Large ribosomal subunit protein uL2cz/uL2cy (rpl2-A) from Morus indica (Mulberry).